The following is an 87-amino-acid chain: U3-theraphotoxin-Hhn1a 15 (87 aa).

Residues 1 to 24 (MVNMKASMFLTFAGLVLLLVVCYA) form the signal peptide. The propeptide occupies 25-52 (SESEEKEFPKEMLSSIFAVDNDFKQEER). 3 disulfide bridges follow: cysteine 54–cysteine 67, cysteine 61–cysteine 72, and cysteine 66–cysteine 79.

The protein belongs to the neurotoxin 10 (Hwtx-1) family. 51 (Hntx-8) subfamily. Hntx-8 sub-subfamily. As to expression, expressed by the venom gland.

It is found in the secreted. Ion channel inhibitor. The chain is U3-theraphotoxin-Hhn1a 15 from Cyriopagopus hainanus (Chinese bird spider).